Here is a 1029-residue protein sequence, read N- to C-terminus: Ig-like and fibronectin type-III domain-containing protein 1 (1029 aa).

The signal sequence occupies residues 1–22; sequence MCNVAEDPSSFSTITIATTCRA. Residues 23–918 are Extracellular-facing; that stretch reads EWPKVSPCIA…RRSASKGSSS (896 aa). N-linked (GlcNAc...) asparagine glycans are attached at residues Asn36, Asn93, Asn120, and Asn165. In terms of domain architecture, Fibronectin type-III 1 spans 90 to 181; it reads APGNVTISEL…TAKLFSTLPT (92 aa). The region spanning 185–227 is the WR1 domain; that stretch reads PLCTIGEPIYMNDGRVMICDAVNPCPNGFRCTGAGSDLSYCCP. 7 N-linked (GlcNAc...) asparagine glycosylation sites follow: Asn257, Asn374, Asn409, Asn442, Asn482, Asn507, and Asn552. Fibronectin type-III domains lie at 330-417 and 427-523; these read AVRN…TKPA and APEK…AQKD. Residues 619–710 form the Ig-like C2-type domain; sequence ASVTMKKDKI…SRVEASSEVI (92 aa). Cys640 and Cys693 are disulfide-bonded. A glycan (N-linked (GlcNAc...) asparagine) is linked at Asn753. The region spanning 817 to 909 is the Fibronectin type-III 4 domain; it reads APSEVSNVRI…SAIPKDSEPR (93 aa). A helical transmembrane segment spans residues 919 to 939; it reads AFWIVVILVVFGVLIAGLAVL. The Cytoplasmic segment spans residues 940–1029; it reads SKRRELPYPI…NGMRYAKLET (90 aa). Residues 988 to 1021 form a disordered region; sequence SATTGTAAATQSEWQSANLEANSTTDNSHEYRNG. Over residues 998 to 1013 the composition is skewed to polar residues; it reads QSEWQSANLEANSTTD.

The protein resides in the cell membrane. The polypeptide is Ig-like and fibronectin type-III domain-containing protein 1 (Caenorhabditis elegans).